We begin with the raw amino-acid sequence, 1255 residues long: ATP-binding cassette sub-family B member 5 (1255 aa).

A helical transmembrane segment spans residues 46 to 66; sequence IVLMTLGILASMINGATVPLM. Residues 51–351 form the ABC transmembrane type-1 1 domain; sequence LGILASMING…SVAPHLETFT (301 aa). 2 N-linked (GlcNAc...) asparagine glycosylation sites follow: Asn86 and Asn92. Residues 104-124 traverse the membrane as a helical segment; the sequence is IIVLTLYYIGIGAAALIFGYV. N-linked (GlcNAc...) asparagine glycosylation is present at Asn189. The next 2 membrane-spanning stretches (helical) occupy residues 290–310 and 314–334; these read LSLG…FWYG and IFGG…FSVI. Residues Asn372 and Asn391 are each glycosylated (N-linked (GlcNAc...) asparagine). The region spanning 387 to 623 is the ABC transporter 1 domain; that stretch reads IEFKNVSFSY…QGLYYSLAMA (237 aa). 422-429 contacts ATP; the sequence is GPSGSGKS. A glycan (N-linked (GlcNAc...) asparagine) is linked at Asn643. 2 helical membrane passes run 694-714 and 738-758; these read VLGT…SIIF and MMLV…GLFY. One can recognise an ABC transmembrane type-1 2 domain in the interval 694-981; sequence VLGTLASALN…TLVWAPEYSK (288 aa). Asn790 is a glycosylation site (N-linked (GlcNAc...) asparagine). 3 helical membrane passes run 814-836, 841-863, and 955-975; these read LGIV…IYGW, LILS…MAGF, and MFIV…TLVW. One can recognise an ABC transporter 2 domain in the interval 1016 to 1254; it reads LEFREVSFVY…GDTYFKLVAA (239 aa). Asn1036 is a glycosylation site (N-linked (GlcNAc...) asparagine). 1051–1058 is a binding site for ATP; it reads GSSGCGKS. N-linked (GlcNAc...) asparagine glycosylation is found at Asn1105, Asn1189, and Asn1229.

Belongs to the ABC transporter superfamily. ABCB family. Multidrug resistance exporter (TC 3.A.1.201) subfamily. In developing eye, expressed in basal limbal epithelium but not in central cornea. Acts as a marker of limbal stem cells.

The protein localises to the cell membrane. It carries out the reaction daunorubicin(in) + ATP + H2O = daunorubicin(out) + ADP + phosphate + H(+). Energy-dependent efflux transporter responsible for decreased drug accumulation in multidrug-resistant cells. Specifically present in limbal stem cells, where it plays a key role in corneal development and repair. The polypeptide is ATP-binding cassette sub-family B member 5 (Mus musculus (Mouse)).